The primary structure comprises 108 residues: UPF0145 protein sll118 (108 aa).

The protein belongs to the UPF0145 family.

This chain is UPF0145 protein sll118, found in Synechocystis sp. (strain ATCC 27184 / PCC 6803 / Kazusa).